A 122-amino-acid polypeptide reads, in one-letter code: Small ribosomal subunit protein uS13 (122 aa).

Residues 99 to 122 (RGQRTHTNARTRKGPAKAIAGKKK) form a disordered region.

The protein belongs to the universal ribosomal protein uS13 family. As to quaternary structure, part of the 30S ribosomal subunit. Forms a loose heterodimer with protein S19. Forms two bridges to the 50S subunit in the 70S ribosome.

Its function is as follows. Located at the top of the head of the 30S subunit, it contacts several helices of the 16S rRNA. In the 70S ribosome it contacts the 23S rRNA (bridge B1a) and protein L5 of the 50S subunit (bridge B1b), connecting the 2 subunits; these bridges are implicated in subunit movement. Contacts the tRNAs in the A and P-sites. The protein is Small ribosomal subunit protein uS13 of Agrobacterium fabrum (strain C58 / ATCC 33970) (Agrobacterium tumefaciens (strain C58)).